Here is a 274-residue protein sequence, read N- to C-terminus: Large ribosomal subunit protein uL2 (274 aa).

Positions 223–264 (VAMNPVDHPHGGGEGRTSGGRHPVSPWGVPTKGYKTRSNKRT) are disordered.

It belongs to the universal ribosomal protein uL2 family. In terms of assembly, part of the 50S ribosomal subunit. Forms a bridge to the 30S subunit in the 70S ribosome.

In terms of biological role, one of the primary rRNA binding proteins. Required for association of the 30S and 50S subunits to form the 70S ribosome, for tRNA binding and peptide bond formation. It has been suggested to have peptidyltransferase activity; this is somewhat controversial. Makes several contacts with the 16S rRNA in the 70S ribosome. This Shewanella denitrificans (strain OS217 / ATCC BAA-1090 / DSM 15013) protein is Large ribosomal subunit protein uL2.